The primary structure comprises 211 residues: MISYYFQGFALGVAMILPLGPQNAFVMNQGIRRQYHLMIALLCALSDLVLISAGIFGGSALLMQSPWLLALVTWGGVAFLLWYGFGALKTAMSSNLELASAEVMKQGRWKIIATMLAVTWLNPHVYLDTFVVLGSLGGQLAMEPKRWFALGTISASFLWFFGLALLAAWLAPRLRTAKAQRIINILVGVVMWLIAFQLAREGVAHMHALFN.

The next 6 membrane-spanning stretches (helical) occupy residues 1 to 21 (MISYYFQGFALGVAMILPLGP), 37 to 57 (LMIALLCALSDLVLISAGIFG), 68 to 88 (LLALVTWGGVAFLLWYGFGAL), 111 to 131 (IIATMLAVTWLNPHVYLDTFV), 147 to 167 (WFALGTISASFLWFFGLALLA), and 179 to 199 (AQRIINILVGVVMWLIAFQLA).

This sequence belongs to the LysE/ArgO transporter (TC 2.A.75) family.

It localises to the cell inner membrane. It carries out the reaction L-arginine(in) = L-arginine(out). In terms of biological role, involved in the export of arginine. Important to control the intracellular level of arginine and the correct balance between arginine and lysine. The sequence is that of Arginine exporter protein ArgO from Salmonella paratyphi A (strain ATCC 9150 / SARB42).